The chain runs to 642 residues: tRNA uridine 5-carboxymethylaminomethyl modification enzyme MnmG (642 aa).

FAD-binding positions include 12-17 (GAGHAG), V124, and S179. Position 272–286 (272–286 (GPRYCPSIEDKITRF)) interacts with NAD(+). Q369 provides a ligand contact to FAD.

This sequence belongs to the MnmG family. As to quaternary structure, homodimer. Heterotetramer of two MnmE and two MnmG subunits. FAD serves as cofactor.

The protein resides in the cytoplasm. In terms of biological role, NAD-binding protein involved in the addition of a carboxymethylaminomethyl (cmnm) group at the wobble position (U34) of certain tRNAs, forming tRNA-cmnm(5)s(2)U34. In Bdellovibrio bacteriovorus (strain ATCC 15356 / DSM 50701 / NCIMB 9529 / HD100), this protein is tRNA uridine 5-carboxymethylaminomethyl modification enzyme MnmG.